Reading from the N-terminus, the 247-residue chain is Probable transcriptional regulatory protein DvMF_3201 (247 aa).

Residues 1-21 form a disordered region; sequence MAGHSKWANIQHRKGRQDAKR.

It belongs to the TACO1 family.

The protein resides in the cytoplasm. The polypeptide is Probable transcriptional regulatory protein DvMF_3201 (Nitratidesulfovibrio vulgaris (strain DSM 19637 / Miyazaki F) (Desulfovibrio vulgaris)).